The chain runs to 39 residues: Bacteriocin SRCAM 602 (39 aa).

Belongs to the bacteriocin class IIA/YGNGV family.

The protein localises to the secreted. Functionally, bacteriocin with antibacterial activity against C.jejuni. In Paenibacillus polymyxa (Bacillus polymyxa), this protein is Bacteriocin SRCAM 602.